The primary structure comprises 202 residues: Pyridoxal 5'-phosphate synthase subunit PdxT (202 aa).

50-52 (GES) serves as a coordination point for L-glutamine. Cys-82 serves as the catalytic Nucleophile. Residues Arg-111 and 140 to 141 (IR) contribute to the L-glutamine site. Catalysis depends on charge relay system residues His-176 and Glu-178.

The protein belongs to the glutaminase PdxT/SNO family. In the presence of PdxS, forms a dodecamer of heterodimers. Only shows activity in the heterodimer.

The enzyme catalyses aldehydo-D-ribose 5-phosphate + D-glyceraldehyde 3-phosphate + L-glutamine = pyridoxal 5'-phosphate + L-glutamate + phosphate + 3 H2O + H(+). It carries out the reaction L-glutamine + H2O = L-glutamate + NH4(+). Its pathway is cofactor biosynthesis; pyridoxal 5'-phosphate biosynthesis. Its function is as follows. Catalyzes the hydrolysis of glutamine to glutamate and ammonia as part of the biosynthesis of pyridoxal 5'-phosphate. The resulting ammonia molecule is channeled to the active site of PdxS. This Streptomyces coelicolor (strain ATCC BAA-471 / A3(2) / M145) protein is Pyridoxal 5'-phosphate synthase subunit PdxT.